A 426-amino-acid polypeptide reads, in one-letter code: Glutamate-1-semialdehyde 2,1-aminomutase (426 aa).

Position 265 is an N6-(pyridoxal phosphate)lysine (Lys265).

It belongs to the class-III pyridoxal-phosphate-dependent aminotransferase family. HemL subfamily. In terms of assembly, homodimer. Requires pyridoxal 5'-phosphate as cofactor.

The protein localises to the cytoplasm. The catalysed reaction is (S)-4-amino-5-oxopentanoate = 5-aminolevulinate. It functions in the pathway porphyrin-containing compound metabolism; protoporphyrin-IX biosynthesis; 5-aminolevulinate from L-glutamyl-tRNA(Glu): step 2/2. The polypeptide is Glutamate-1-semialdehyde 2,1-aminomutase (Alcanivorax borkumensis (strain ATCC 700651 / DSM 11573 / NCIMB 13689 / SK2)).